The primary structure comprises 418 residues: Glutamyl-tRNA reductase (418 aa).

Substrate is bound by residues 49-52 (TCNR), serine 109, 114-116 (EPQ), and glutamine 120. Cysteine 50 (nucleophile) is an active-site residue. NADP(+) is bound at residue 189–194 (GAGETI).

It belongs to the glutamyl-tRNA reductase family. As to quaternary structure, homodimer.

The enzyme catalyses (S)-4-amino-5-oxopentanoate + tRNA(Glu) + NADP(+) = L-glutamyl-tRNA(Glu) + NADPH + H(+). The protein operates within porphyrin-containing compound metabolism; protoporphyrin-IX biosynthesis; 5-aminolevulinate from L-glutamyl-tRNA(Glu): step 1/2. Catalyzes the NADPH-dependent reduction of glutamyl-tRNA(Glu) to glutamate 1-semialdehyde (GSA). The polypeptide is Glutamyl-tRNA reductase (Escherichia coli O139:H28 (strain E24377A / ETEC)).